Reading from the N-terminus, the 226-residue chain is Isoprenyl transferase (226 aa).

The active site involves Asp-12. A Mg(2+)-binding site is contributed by Asp-12. Substrate is bound by residues 13–16, Trp-17, Lys-25, His-29, and 57–59; these read GNAR and SSE. The active-site Proton acceptor is the Asn-60. Substrate contacts are provided by residues Trp-61, Arg-63, Arg-174, and 180 to 182; that span reads RIS. Residue Glu-193 participates in Mg(2+) binding.

Belongs to the UPP synthase family. In terms of assembly, homodimer. It depends on Mg(2+) as a cofactor.

Its function is as follows. Catalyzes the condensation of isopentenyl diphosphate (IPP) with allylic pyrophosphates generating different type of terpenoids. This chain is Isoprenyl transferase, found in Rickettsia sibirica (strain ATCC VR-151 / 246).